Here is a 709-residue protein sequence, read N- to C-terminus: UV-stimulated scaffold protein A (709 aa).

The span at Met1–Glu10 shows a compositional bias: basic and acidic residues. Residues Met1–Leu20 form a disordered region. Positions Asp2–Asp145 are VHS-like. A coiled-coil region spans residues Lys165–Cys199. 2 disordered regions span residues Ser230–Leu289 and Glu386–Glu406. Residues Pro280 to Leu289 are compositionally biased toward acidic residues. 2 positions are modified to phosphoserine: Ser281 and Ser287. Over residues Glu386 to Ala395 the composition is skewed to basic and acidic residues. Residues Gly397–Glu406 show a composition bias toward acidic residues. Residue Lys414 forms a Glycyl lysine isopeptide (Lys-Gly) (interchain with G-Cter in ubiquitin) linkage. The disordered stretch occupies residues Asp469 to Glu495. Low complexity predominate over residues Ala477–Pro486. The segment at Gln564–Ile591 adopts a UVSSA-type zinc-finger fold. Residues Cys567, Cys577, Cys585, and His588 each contribute to the Zn(2+) site. Residues His588–Tyr655 form a disordered region. Residues Val592 to Glu632 show a composition bias toward basic and acidic residues. The span at Gly646–Tyr655 shows a compositional bias: basic residues.

It belongs to the UVSSA family. Interacts with the elongating form of RNA polymerase II (RNA pol IIo) during transcription stress. Interacts with the TFIIH complex during transcription stress. Interacts with ERCC6. Interacts with ERCC8. Interacts with USP7. In terms of processing, monoubiquitinated at Lys-414 in response to transcription stress; this promotes efficient transfer of TFIIH to stalled RNA polymerase II.

The protein resides in the chromosome. Functionally, factor involved in transcription-coupled nucleotide excision repair (TC-NER), a mechanism that rapidly removes RNA polymerase II-blocking lesions from the transcribed strand of active genes. Acts as a key adapter that promotes recruitment of factors involved in TC-NER. Facilitates the ubiquitination of the elongating form of RNA polymerase II (RNA pol IIo) at DNA damage sites, thereby promoting RNA pol IIo backtracking and access by the TC-NER machinery to lesion sites. Also promotes stabilization of ERCC6/CSB by recruiting deubiquitinating enzyme USP7 to TC-NER complexes, preventing UV-induced degradation of ERCC6 by the proteasome. Mediates the recruitment of the TFIIH complex and other factors that are required for nucleotide excision repair to RNA polymerase II. Also required to inactivate stalled RNA polymerase II by blocking the access of TCEA1/TFIIS, thereby preventing reactivation of RNA polymerase II. Not involved in processing oxidative damage. In Homo sapiens (Human), this protein is UV-stimulated scaffold protein A.